The chain runs to 493 residues: Probable glycine dehydrogenase (decarboxylating) subunit 2 (493 aa).

Lysine 269 carries the N6-(pyridoxal phosphate)lysine modification.

This sequence belongs to the GcvP family. C-terminal subunit subfamily. The glycine cleavage system is composed of four proteins: P, T, L and H. In this organism, the P 'protein' is a heterodimer of two subunits. Pyridoxal 5'-phosphate is required as a cofactor.

It catalyses the reaction N(6)-[(R)-lipoyl]-L-lysyl-[glycine-cleavage complex H protein] + glycine + H(+) = N(6)-[(R)-S(8)-aminomethyldihydrolipoyl]-L-lysyl-[glycine-cleavage complex H protein] + CO2. The glycine cleavage system catalyzes the degradation of glycine. The P protein binds the alpha-amino group of glycine through its pyridoxal phosphate cofactor; CO(2) is released and the remaining methylamine moiety is then transferred to the lipoamide cofactor of the H protein. The protein is Probable glycine dehydrogenase (decarboxylating) subunit 2 of Chloroherpeton thalassium (strain ATCC 35110 / GB-78).